Here is a 266-residue protein sequence, read N- to C-terminus: DNA-directed RNA polymerase subunit Rpo3 (266 aa).

Residues Cys-205, Cys-208, and Cys-211 each contribute to the [3Fe-4S] cluster site.

This sequence belongs to the archaeal Rpo3/eukaryotic RPB3 RNA polymerase subunit family. Part of the RNA polymerase complex. Requires [3Fe-4S] cluster as cofactor.

It localises to the cytoplasm. The enzyme catalyses RNA(n) + a ribonucleoside 5'-triphosphate = RNA(n+1) + diphosphate. Its function is as follows. DNA-dependent RNA polymerase (RNAP) catalyzes the transcription of DNA into RNA using the four ribonucleoside triphosphates as substrates. The chain is DNA-directed RNA polymerase subunit Rpo3 from Methanosarcina mazei (strain ATCC BAA-159 / DSM 3647 / Goe1 / Go1 / JCM 11833 / OCM 88) (Methanosarcina frisia).